The primary structure comprises 138 residues: 1,4-dihydroxy-2-naphthoyl-CoA hydrolase (138 aa).

Residue Asp16 is part of the active site.

This sequence belongs to the 4-hydroxybenzoyl-CoA thioesterase family. DHNA-CoA hydrolase subfamily.

It carries out the reaction 1,4-dihydroxy-2-naphthoyl-CoA + H2O = 1,4-dihydroxy-2-naphthoate + CoA + H(+). Its pathway is cofactor biosynthesis; phylloquinone biosynthesis. It participates in quinol/quinone metabolism; 1,4-dihydroxy-2-naphthoate biosynthesis; 1,4-dihydroxy-2-naphthoate from chorismate: step 7/7. Functionally, catalyzes the specific hydrolysis of 1,4-dihydroxy-2-naphthoyl-CoA (DHNA-CoA) to 1,4-dihydroxy-2-naphthoate (DHNA), a reaction involved in phylloquinone (vitamin K1) biosynthesis. Is not active on benzoyl-CoA, phenylacetyl-CoA and aliphatic acyl-CoA thioesters. This chain is 1,4-dihydroxy-2-naphthoyl-CoA hydrolase, found in Synechocystis sp. (strain ATCC 27184 / PCC 6803 / Kazusa).